Consider the following 424-residue polypeptide: Enolase (424 aa).

A (2R)-2-phosphoglycerate-binding site is contributed by Gln-162. Glu-204 acts as the Proton donor in catalysis. Mg(2+)-binding residues include Asp-241, Glu-284, and Asp-311. 4 residues coordinate (2R)-2-phosphoglycerate: Lys-336, Arg-365, Ser-366, and Lys-387. The active-site Proton acceptor is Lys-336.

This sequence belongs to the enolase family. Mg(2+) serves as cofactor.

The protein resides in the cytoplasm. The protein localises to the secreted. Its subcellular location is the cell surface. The enzyme catalyses (2R)-2-phosphoglycerate = phosphoenolpyruvate + H2O. It participates in carbohydrate degradation; glycolysis; pyruvate from D-glyceraldehyde 3-phosphate: step 4/5. Catalyzes the reversible conversion of 2-phosphoglycerate (2-PG) into phosphoenolpyruvate (PEP). It is essential for the degradation of carbohydrates via glycolysis. In Rhizobium etli (strain ATCC 51251 / DSM 11541 / JCM 21823 / NBRC 15573 / CFN 42), this protein is Enolase.